We begin with the raw amino-acid sequence, 369 residues long: MYALLLRVMFLVPPERIHHLAFAAMRVAARFAPTRALVRRLAVVDDPILHSTVFGVPFRAPLGLAAGFDKNAEGVDVWGPFGWGFAEIGTVTAQAQPGNPAPRLFRLPADRALINRMGFNNHGAARAAEQLRARTATVPIGANIGKTKVVEPAGAAADYATSAALLGPLADFVVVNVSSPNTPGLRDLQAVESLRPLLRTVLETVADGGRRVPVLVKIAPDLSDEDIDAVADLAVELGLAGIVATNTTIRRDGLHTDPEDVAAMGAGGLSGAPVADRSLEVLRRLYRRVGDRLALISVGGIETPEQAYQRVLAGASLLQGYTGFIYGGPFWTRKIHRGLAELLRRDGYTSLTEAVGAEHRGPRPQADTA.

FMN-binding positions include 66–70 (AGFDK) and Thr-90. Lys-70 is a binding site for substrate. 115 to 119 (NRMGF) is a binding site for substrate. FMN is bound by residues Asn-143 and Asn-176. Asn-176 is a binding site for substrate. Ser-179 (nucleophile) is an active-site residue. Asn-181 contributes to the substrate binding site. FMN is bound by residues Lys-217 and Thr-245. Position 246–247 (246–247 (NT)) interacts with substrate. Residues Gly-271, Gly-300, and 321–322 (YT) each bind FMN.

It belongs to the dihydroorotate dehydrogenase family. Type 2 subfamily. In terms of assembly, monomer. Requires FMN as cofactor.

It localises to the cell membrane. The catalysed reaction is (S)-dihydroorotate + a quinone = orotate + a quinol. It participates in pyrimidine metabolism; UMP biosynthesis via de novo pathway; orotate from (S)-dihydroorotate (quinone route): step 1/1. Functionally, catalyzes the conversion of dihydroorotate to orotate with quinone as electron acceptor. In Nocardia farcinica (strain IFM 10152), this protein is Dihydroorotate dehydrogenase (quinone).